The primary structure comprises 322 residues: Tyrosine recombinase XerC (322 aa).

The region spanning Pro-14–Asp-104 is the Core-binding (CB) domain. The region spanning Arg-125–Asp-311 is the Tyr recombinase domain. Active-site residues include Arg-170, Lys-195, His-263, Arg-266, and His-289. Tyr-298 functions as the O-(3'-phospho-DNA)-tyrosine intermediate in the catalytic mechanism.

Belongs to the 'phage' integrase family. XerC subfamily. As to quaternary structure, forms a cyclic heterotetrameric complex composed of two molecules of XerC and two molecules of XerD.

It is found in the cytoplasm. Functionally, site-specific tyrosine recombinase, which acts by catalyzing the cutting and rejoining of the recombining DNA molecules. The XerC-XerD complex is essential to convert dimers of the bacterial chromosome into monomers to permit their segregation at cell division. It also contributes to the segregational stability of plasmids. This chain is Tyrosine recombinase XerC, found in Methylobacterium nodulans (strain LMG 21967 / CNCM I-2342 / ORS 2060).